Consider the following 109-residue polypeptide: Non-structural protein of 12.7 kDa (109 aa).

The protein belongs to the coronaviruses ns12.7 protein family.

This is Non-structural protein of 12.7 kDa from Bos taurus (Bovine).